The primary structure comprises 318 residues: UDP-N-acetylenolpyruvoylglucosamine reductase (318 aa).

One can recognise an FAD-binding PCMH-type domain in the interval 38–204 (IGGVCPVIVE…LGIEILLKEG (167 aa)). R182 is an active-site residue. Residues 212 to 229 (SLKDKRDRRNSSQPENKK) show a composition bias toward basic and acidic residues. The interval 212–232 (SLKDKRDRRNSSQPENKKSAG) is disordered. S233 serves as the catalytic Proton donor. The active site involves E310.

This sequence belongs to the MurB family. The cofactor is FAD.

The protein localises to the cytoplasm. It carries out the reaction UDP-N-acetyl-alpha-D-muramate + NADP(+) = UDP-N-acetyl-3-O-(1-carboxyvinyl)-alpha-D-glucosamine + NADPH + H(+). It functions in the pathway cell wall biogenesis; peptidoglycan biosynthesis. In terms of biological role, cell wall formation. In Leptospira interrogans serogroup Icterohaemorrhagiae serovar Lai (strain 56601), this protein is UDP-N-acetylenolpyruvoylglucosamine reductase.